The sequence spans 93 residues: Small ribosomal subunit protein uS19 (93 aa).

This sequence belongs to the universal ribosomal protein uS19 family.

Its function is as follows. Protein S19 forms a complex with S13 that binds strongly to the 16S ribosomal RNA. The chain is Small ribosomal subunit protein uS19 from Agathobacter rectalis (strain ATCC 33656 / DSM 3377 / JCM 17463 / KCTC 5835 / VPI 0990) (Eubacterium rectale).